A 357-amino-acid chain; its full sequence is UPF0283 membrane protein BMEA_A1074 (357 aa).

The disordered stretch occupies residues 1 to 36 (MSDKTPRKPTAFRLEQPARVSAASEQEEPRRPRAVK). Basic and acidic residues predominate over residues 27–36 (EEPRRPRAVK). 2 helical membrane-spanning segments follow: residues 78–98 (ILFG…TEDL) and 109–129 (LGWT…AIIL).

This sequence belongs to the UPF0283 family.

It localises to the cell inner membrane. The protein is UPF0283 membrane protein BMEA_A1074 of Brucella melitensis biotype 2 (strain ATCC 23457).